The sequence spans 516 residues: Exoglucanase 1 (516 aa).

The signal sequence occupies residues 1-17 (MRASLLAFSLAAAVAGG). The interval 18 to 445 (QQAGTLTAKR…GHLGISPFSG (428 aa)) is catalytic. Asn-45 carries an N-linked (GlcNAc...) asparagine glycan. Glu-223 functions as the Nucleophile in the catalytic mechanism. Catalysis depends on Glu-228, which acts as the Proton donor. N-linked (GlcNAc...) asparagine glycosylation is present at Asn-281. The disordered stretch occupies residues 444-481 (SGGSSGTPPSNPSSSASPTSSTAKPSSTSTASNPSGTG). Residues 446 to 480 (GSSGTPPSNPSSSASPTSSTAKPSSTSTASNPSGT) are linker. Over residues 449-481 (GTPPSNPSSSASPTSSTAKPSSTSTASNPSGTG) the composition is skewed to low complexity. Residues 480–516 (TGAAHWAQCGGIGFSGPTTCPEPYTCAKDHDIYSQCV) enclose the CBM1 domain. 2 disulfide bridges follow: Cys-488–Cys-505 and Cys-499–Cys-515.

Belongs to the glycosyl hydrolase 7 (cellulase C) family.

The protein localises to the secreted. It carries out the reaction Hydrolysis of (1-&gt;4)-beta-D-glucosidic linkages in cellulose and cellotetraose, releasing cellobiose from the non-reducing ends of the chains.. The polypeptide is Exoglucanase 1 (cbh-1) (Neurospora crassa (strain ATCC 24698 / 74-OR23-1A / CBS 708.71 / DSM 1257 / FGSC 987)).